Here is a 494-residue protein sequence, read N- to C-terminus: Probable malate:quinone oxidoreductase 3 (494 aa).

This sequence belongs to the MQO family. It depends on FAD as a cofactor.

The catalysed reaction is (S)-malate + a quinone = a quinol + oxaloacetate. It functions in the pathway carbohydrate metabolism; tricarboxylic acid cycle; oxaloacetate from (S)-malate (quinone route): step 1/1. This is Probable malate:quinone oxidoreductase 3 from Staphylococcus epidermidis (strain ATCC 35984 / DSM 28319 / BCRC 17069 / CCUG 31568 / BM 3577 / RP62A).